A 122-amino-acid chain; its full sequence is Basic phospholipase A2 Cdr-12 (122 aa).

Intrachain disulfides connect C26–C115, C28–C44, C43–C95, C49–C122, C50–C88, C57–C81, and C75–C86. Ca(2+) contacts are provided by Y27, G29, and G31. The active site involves H47. Residue D48 participates in Ca(2+) binding. D89 is an active-site residue.

Requires Ca(2+) as cofactor. Expressed by the venom gland.

The protein localises to the secreted. It catalyses the reaction a 1,2-diacyl-sn-glycero-3-phosphocholine + H2O = a 1-acyl-sn-glycero-3-phosphocholine + a fatty acid + H(+). Snake venom phospholipase A2 (PLA2) that induces myonecrosis and edema upon intramuscular injections in mice. In vitro, causes a potent blockade of neuromuscular transmission in young chicken biventer cervicis preparation and produces cytotoxicity in murine C2C12 skeletal muscle myotubes and lack cytolytic activity upon myoblasts in vitro. PLA2 catalyzes the calcium-dependent hydrolysis of the 2-acyl groups in 3-sn-phosphoglycerides. This is Basic phospholipase A2 Cdr-12 from Crotalus durissus ruruima (South American rattlesnake).